The sequence spans 367 residues: Anhydro-N-acetylmuramic acid kinase (367 aa).

11–18 (GTSLDGVD) lines the ATP pocket.

It belongs to the anhydro-N-acetylmuramic acid kinase family.

It carries out the reaction 1,6-anhydro-N-acetyl-beta-muramate + ATP + H2O = N-acetyl-D-muramate 6-phosphate + ADP + H(+). It participates in amino-sugar metabolism; 1,6-anhydro-N-acetylmuramate degradation. The protein operates within cell wall biogenesis; peptidoglycan recycling. Its function is as follows. Catalyzes the specific phosphorylation of 1,6-anhydro-N-acetylmuramic acid (anhMurNAc) with the simultaneous cleavage of the 1,6-anhydro ring, generating MurNAc-6-P. Is required for the utilization of anhMurNAc either imported from the medium or derived from its own cell wall murein, and thus plays a role in cell wall recycling. The sequence is that of Anhydro-N-acetylmuramic acid kinase from Rhodopseudomonas palustris (strain HaA2).